Consider the following 261-residue polypeptide: DNA-directed RNA polymerase subunit Rpo3 (261 aa).

The protein belongs to the archaeal Rpo3/eukaryotic RPB3 RNA polymerase subunit family. In terms of assembly, part of the RNA polymerase complex.

It is found in the cytoplasm. The enzyme catalyses RNA(n) + a ribonucleoside 5'-triphosphate = RNA(n+1) + diphosphate. Its function is as follows. DNA-dependent RNA polymerase (RNAP) catalyzes the transcription of DNA into RNA using the four ribonucleoside triphosphates as substrates. In Pyrococcus furiosus (strain ATCC 43587 / DSM 3638 / JCM 8422 / Vc1), this protein is DNA-directed RNA polymerase subunit Rpo3.